Reading from the N-terminus, the 58-residue chain is Large ribosomal subunit protein bL32 (58 aa).

The protein belongs to the bacterial ribosomal protein bL32 family.

The sequence is that of Large ribosomal subunit protein bL32 from Ligilactobacillus salivarius (strain UCC118) (Lactobacillus salivarius).